The chain runs to 218 residues: Glutathione S-transferase PM239X14 (218 aa).

The GST N-terminal domain occupies 2–85 (VTVKLYGMAY…YLVAKYGKGS (84 aa)). Glutathione-binding positions include 12 to 13 (ST), 41 to 42 (HK), 55 to 56 (VI), and 69 to 70 (ES). The region spanning 93–218 (DPKAYGLFEQ…LLRNSSKEFM (126 aa)) is the GST C-terminal domain.

It belongs to the GST superfamily. Phi family. Expressed in vegetative rosettes.

It localises to the cytoplasm. The protein localises to the cytosol. The catalysed reaction is RX + glutathione = an S-substituted glutathione + a halide anion + H(+). Specifically catalyzes the conjugation of synthetic 1-chloro-2,4-ditrobenzene to GSH. Also functions as a glutathione peroxidase, converting linoleate oxidation products into their corresponding hydroxyacids. This enzyme may thus serve to protect the cell from oxygen toxicity as well as from exogenous toxins such as herbicides. In Arabidopsis thaliana (Mouse-ear cress), this protein is Glutathione S-transferase PM239X14.